The following is a 180-amino-acid chain: Shikimate kinase (180 aa).

14–19 (GAGKSS) is a binding site for ATP. Ser-18 provides a ligand contact to Mg(2+). Residues Asp-36, Arg-60, and Gly-82 each contribute to the substrate site. Arg-120 provides a ligand contact to ATP. Residue Arg-139 participates in substrate binding.

Belongs to the shikimate kinase family. As to quaternary structure, monomer. Mg(2+) serves as cofactor.

It localises to the cytoplasm. It carries out the reaction shikimate + ATP = 3-phosphoshikimate + ADP + H(+). It functions in the pathway metabolic intermediate biosynthesis; chorismate biosynthesis; chorismate from D-erythrose 4-phosphate and phosphoenolpyruvate: step 5/7. In terms of biological role, catalyzes the specific phosphorylation of the 3-hydroxyl group of shikimic acid using ATP as a cosubstrate. The sequence is that of Shikimate kinase from Xylella fastidiosa (strain M23).